The primary structure comprises 329 residues: DNA-directed RNA polymerase subunit alpha (329 aa).

The interval 1–235 (MQGSVTEFLK…EQLEAFVDLR (235 aa)) is alpha N-terminal domain (alpha-NTD). The interval 249 to 329 (FDPILLRPVD…NWPPASIADE (81 aa)) is alpha C-terminal domain (alpha-CTD).

It belongs to the RNA polymerase alpha chain family. Homodimer. The RNAP catalytic core consists of 2 alpha, 1 beta, 1 beta' and 1 omega subunit. When a sigma factor is associated with the core the holoenzyme is formed, which can initiate transcription.

The catalysed reaction is RNA(n) + a ribonucleoside 5'-triphosphate = RNA(n+1) + diphosphate. Its function is as follows. DNA-dependent RNA polymerase catalyzes the transcription of DNA into RNA using the four ribonucleoside triphosphates as substrates. In Pectobacterium atrosepticum (strain SCRI 1043 / ATCC BAA-672) (Erwinia carotovora subsp. atroseptica), this protein is DNA-directed RNA polymerase subunit alpha.